Reading from the N-terminus, the 134-residue chain is Profilin-3 (134 aa).

A disulfide bridge links Cys-13 with Cys-118. An Involved in PIP2 interaction motif is present at residues 84 to 100 (AVIRGKKGSGGITIKKT). Thr-114 is subject to Phosphothreonine.

This sequence belongs to the profilin family. As to quaternary structure, occurs in many kinds of cells as a complex with monomeric actin in a 1:1 ratio. In terms of processing, phosphorylated by MAP kinases.

It is found in the cytoplasm. Its subcellular location is the cytoskeleton. Functionally, binds to actin and affects the structure of the cytoskeleton. At high concentrations, profilin prevents the polymerization of actin, whereas it enhances it at low concentrations. The sequence is that of Profilin-3 from Olea europaea (Common olive).